The following is a 132-amino-acid chain: Protein NrdI (132 aa).

It belongs to the NrdI family.

Its function is as follows. Probably involved in ribonucleotide reductase function. The polypeptide is Protein NrdI (Bartonella tribocorum (strain CIP 105476 / IBS 506)).